A 136-amino-acid chain; its full sequence is Large ribosomal subunit protein uL16 (136 aa).

This sequence belongs to the universal ribosomal protein uL16 family. In terms of assembly, part of the 50S ribosomal subunit.

Functionally, binds 23S rRNA and is also seen to make contacts with the A and possibly P site tRNAs. This chain is Large ribosomal subunit protein uL16, found in Orientia tsutsugamushi (strain Boryong) (Rickettsia tsutsugamushi).